The chain runs to 193 residues: Adenylate kinase (193 aa).

11 to 16 (GSGKGT) is an ATP binding site. The segment at 31–60 (STGDIFRANVKGETPLGLEAKKYMDAGDYV) is NMP. Residues Thr32, Arg37, 58–60 (DYV), 86–89 (GYPR), and Gln93 contribute to the AMP site. Residues 127-137 (GRAKESGRSDD) are LID. Residue Arg128 participates in ATP binding. The AMP site is built by Arg134 and Arg145. Gly173 provides a ligand contact to ATP.

Belongs to the adenylate kinase family. As to quaternary structure, monomer.

The protein localises to the cytoplasm. It catalyses the reaction AMP + ATP = 2 ADP. The protein operates within purine metabolism; AMP biosynthesis via salvage pathway; AMP from ADP: step 1/1. Its function is as follows. Catalyzes the reversible transfer of the terminal phosphate group between ATP and AMP. Plays an important role in cellular energy homeostasis and in adenine nucleotide metabolism. The chain is Adenylate kinase from Renibacterium salmoninarum (strain ATCC 33209 / DSM 20767 / JCM 11484 / NBRC 15589 / NCIMB 2235).